We begin with the raw amino-acid sequence, 231 residues long: Adenylate kinase (231 aa).

12–17 (GAGKGT) is an ATP binding site. Residues 32–61 (STGDMLRAAVKAKTPLGLEVKKIMESGGLV) are NMP. AMP is bound by residues threonine 33, arginine 38, 59–61 (GLV), 87–90 (GFPR), and glutamine 94. Residues 124–161 (GRLIHPASGRTYHRRYNPPKVADKDDVTGEPLIQRADD) are LID. Residues arginine 125 and 134–135 (TY) contribute to the ATP site. Positions 158 and 169 each coordinate AMP. Glycine 205 provides a ligand contact to ATP.

Belongs to the adenylate kinase family. As to quaternary structure, monomer.

The protein resides in the cytoplasm. It carries out the reaction AMP + ATP = 2 ADP. The protein operates within purine metabolism; AMP biosynthesis via salvage pathway; AMP from ADP: step 1/1. Functionally, catalyzes the reversible transfer of the terminal phosphate group between ATP and AMP. Plays an important role in cellular energy homeostasis and in adenine nucleotide metabolism. The protein is Adenylate kinase of Coxiella burnetii (strain CbuK_Q154) (Coxiella burnetii (strain Q154)).